The primary structure comprises 332 residues: Fructose-1,6-bisphosphatase class 1 (332 aa).

E89, D110, L112, and D113 together coordinate Mg(2+). Residues D113–S116, N206, Y239, Y257–Y259, and K269 contribute to the substrate site. E275 contacts Mg(2+).

The protein belongs to the FBPase class 1 family. As to quaternary structure, homotetramer. Mg(2+) serves as cofactor.

Its subcellular location is the cytoplasm. It carries out the reaction beta-D-fructose 1,6-bisphosphate + H2O = beta-D-fructose 6-phosphate + phosphate. It functions in the pathway carbohydrate biosynthesis; gluconeogenesis. The chain is Fructose-1,6-bisphosphatase class 1 from Salmonella arizonae (strain ATCC BAA-731 / CDC346-86 / RSK2980).